Here is a 662-residue protein sequence, read N- to C-terminus: Probable quinol oxidase subunit 1 (662 aa).

The next 2 membrane-spanning stretches (helical) occupy residues 14-34 and 58-78; these read WMIT…IAVI and IMYL…ALLI. Position 102 (histidine 102) interacts with Fe(II)-heme a. Transmembrane regions (helical) follow at residues 103 to 123, 140 to 160, 187 to 207, 228 to 248, 273 to 293, 311 to 331, 336 to 356, and 376 to 396; these read GVIM…NIVV, VSFW…IIGG, IAIQ…FVTI, FITT…LALM, FFWV…FGIY, MVWA…HHFF, GALI…PTGV, and MLFS…GVML. 4 residues coordinate Cu cation: histidine 279, tyrosine 283, histidine 328, and histidine 329. The segment at residues 279-283 is a cross-link (1'-histidyl-3'-tyrosine (His-Tyr)); sequence HPEVY. Histidine 414 lines the heme a3 pocket. A run of 5 helical transmembrane segments spans residues 415–435, 451–471, 493–513, 587–604, and 608–627; these read FHYT…IFWY, CFWF…ILGL, ISTI…VSIV, PVGF…FFLI, and VIPA…YRSF. Histidine 416 contributes to the Fe(II)-heme a binding site.

The protein belongs to the heme-copper respiratory oxidase family. The cofactor is Cu cation. Ferriheme a is required as a cofactor. Requires Heme A3. as cofactor.

The protein resides in the cell membrane. The enzyme catalyses 2 a quinol + O2 = 2 a quinone + 2 H2O. It functions in the pathway energy metabolism; oxidative phosphorylation. Catalyzes quinol oxidation with the concomitant reduction of oxygen to water. The chain is Probable quinol oxidase subunit 1 (qoxB) from Staphylococcus aureus (strain USA300).